The chain runs to 174 residues: Myeloid-derived growth factor (174 aa).

The signal sequence occupies residues Met1–Thr32.

The protein belongs to the MYDGF family.

The protein localises to the secreted. The protein resides in the endoplasmic reticulum-Golgi intermediate compartment. It is found in the endoplasmic reticulum. It localises to the golgi apparatus. In terms of biological role, bone marrow-derived monocyte and paracrine-acting protein that promotes cardiac myocyte survival and adaptive angiogenesis for cardiac protection and/or repair after myocardial infarction (MI). Stimulates endothelial cell proliferation through a MAPK1/3-, STAT3- and CCND1-mediated signaling pathway. Inhibits cardiac myocyte apoptosis in a PI3K/AKT-dependent signaling pathway. The sequence is that of Myeloid-derived growth factor from Bos taurus (Bovine).